The following is a 555-amino-acid chain: Glutamine--tRNA ligase (555 aa).

A 'HIGH' region motif is present at residues 34–44 (PEPNGYLHIGH). Residues 35–37 (EPN) and 41–47 (HIGHAKS) contribute to the ATP site. L-glutamine contacts are provided by D67 and Y212. Residues T231, 261 to 262 (RL), and 269 to 271 (MSK) contribute to the ATP site. The short motif at 268-272 (IMSKR) is the 'KMSKS' region element.

It belongs to the class-I aminoacyl-tRNA synthetase family. Monomer.

It is found in the cytoplasm. The enzyme catalyses tRNA(Gln) + L-glutamine + ATP = L-glutaminyl-tRNA(Gln) + AMP + diphosphate. This Erwinia tasmaniensis (strain DSM 17950 / CFBP 7177 / CIP 109463 / NCPPB 4357 / Et1/99) protein is Glutamine--tRNA ligase.